A 237-amino-acid chain; its full sequence is 2-C-methyl-D-erythritol 4-phosphate cytidylyltransferase (237 aa).

It belongs to the IspD/TarI cytidylyltransferase family. IspD subfamily.

The enzyme catalyses 2-C-methyl-D-erythritol 4-phosphate + CTP + H(+) = 4-CDP-2-C-methyl-D-erythritol + diphosphate. It functions in the pathway isoprenoid biosynthesis; isopentenyl diphosphate biosynthesis via DXP pathway; isopentenyl diphosphate from 1-deoxy-D-xylulose 5-phosphate: step 2/6. In terms of biological role, catalyzes the formation of 4-diphosphocytidyl-2-C-methyl-D-erythritol from CTP and 2-C-methyl-D-erythritol 4-phosphate (MEP). The sequence is that of 2-C-methyl-D-erythritol 4-phosphate cytidylyltransferase from Vibrio vulnificus (strain YJ016).